The primary structure comprises 1982 residues: Ras guanine nucleotide exchange factor V (1982 aa).

15 LRR repeats span residues 1–26 (MGNI…SLEG), 47–68 (LTQL…ITNL), 69–94 (SNLS…PFKP), 105–128 (NENL…VFVL), 130–151 (NLKQ…LCGG), 164–187 (ACQL…IGDQ), 188–210 (LTTL…SFSN), 212–234 (VSLT…LCTL), 236–257 (KLVH…HTLG), 261–284 (LPSL…ILEI), 286–307 (SLRV…IGNL), 308–330 (LNLN…IGEL), 331–352 (INLR…EFSK), 354–376 (SKLN…LHSL), and 378–399 (QLLR…LIKS). The Extracellular portion of the chain corresponds to 1 to 1831 (MGNINSICLN…IANAFYELRN (1831 aa)). Disordered stretches follow at residues 414–436 (YGST…STHG), 457–532 (NQIN…NKKQ), and 615–654 (NNSG…RRGS). 2 stretches are compositionally biased toward low complexity: residues 415-436 (GSTM…STHG) and 457-495 (NQIN…TPNG). One copy of the LRR 16 repeat lies at 443-466 (DILLSSVTLNNSILNQINNNNNNN). Polar residues predominate over residues 506–520 (LTISRSLFRGNSSNL). The stretch at 515-567 (GNSSNLESEKEDFINKKQQQQQQQQQQQQQQQQQQQQQQQQQQQQQQQQQQLG) forms a coiled coil. The LRR 17 repeat unit spans residues 592 to 615 (EDDIQKMQLGLEALSNLETSIGSN). Gly residues predominate over residues 616-642 (NSGGGDSMNGSGGNINNSGGSGSGCGT). LRR repeat units follow at residues 657–684 (LPPT…VMSG) and 773–796 (HSNL…LSSS). Disordered stretches follow at residues 756–778 (QSST…NLSQ) and 807–829 (LQFQ…SNQP). The region spanning 832-1236 (TIVPSFSKFK…QIKYSIDRYG (405 aa)) is the GBD/FH3 domain. LRR repeat units lie at residues 979–1003 (LLGI…GYCL), 1075–1100 (SPYV…VFKI), 1239–1263 (VPAI…RWVD), and 1689–1712 (VQNM…FVDL). In terms of domain architecture, N-terminal Ras-GEF spans 1595 to 1717 (KDRRVSSVTL…LFVDLSTKSY (123 aa)). The region spanning 1747 to 1974 (DEIEIARQLS…YEMSLSAEPR (228 aa)) is the Ras-GEF domain. Residues 1832–1848 (YHLLMAIISGLNASPVL) form a helical membrane-spanning segment. Topologically, residues 1849–1982 (RLKYTKGKLS…PRNAERYDIQ (134 aa)) are cytoplasmic. LRR repeat units lie at residues 1865–1888 (LDTL…LAAA) and 1917–1941 (RINF…LFPY).

Its subcellular location is the membrane. Promotes the exchange of Ras-bound GDP by GTP. The chain is Ras guanine nucleotide exchange factor V (gefV) from Dictyostelium discoideum (Social amoeba).